We begin with the raw amino-acid sequence, 260 residues long: Zinc import ATP-binding protein ZnuC (260 aa).

Positions 14–229 constitute an ABC transporter domain; sequence LTARNLCADR…PEFARLFGDQ (216 aa). 46-53 is an ATP binding site; sequence GPNGAGKS.

Belongs to the ABC transporter superfamily. Zinc importer (TC 3.A.1.15.5) family. The complex is composed of two ATP-binding proteins (ZnuC), two transmembrane proteins (ZnuB) and a solute-binding protein (ZnuA).

It is found in the cell inner membrane. It catalyses the reaction Zn(2+)(out) + ATP(in) + H2O(in) = Zn(2+)(in) + ADP(in) + phosphate(in) + H(+)(in). Its function is as follows. Part of the ABC transporter complex ZnuABC involved in zinc import. Responsible for energy coupling to the transport system. The protein is Zinc import ATP-binding protein ZnuC of Magnetococcus marinus (strain ATCC BAA-1437 / JCM 17883 / MC-1).